The sequence spans 402 residues: Arginine deiminase (402 aa).

Cys-392 functions as the Amidino-cysteine intermediate in the catalytic mechanism.

It belongs to the arginine deiminase family.

The protein resides in the cytoplasm. It carries out the reaction L-arginine + H2O = L-citrulline + NH4(+). Its pathway is amino-acid degradation; L-arginine degradation via ADI pathway; carbamoyl phosphate from L-arginine: step 1/2. This Mycobacterium bovis (strain ATCC BAA-935 / AF2122/97) protein is Arginine deiminase (arcA).